The following is a 1091-amino-acid chain: TATA element modulatory factor (1091 aa).

Disordered regions lie at residues isoleucine 42–arginine 86 and phenylalanine 100–serine 280. Residues tryptophan 57–isoleucine 81 show a composition bias toward polar residues. Serine 73, serine 78, serine 112, and serine 136 each carry phosphoserine. Composition is skewed to low complexity over residues lysine 111–serine 122, serine 131–serine 142, and serine 194–threonine 211. Serine 213 is subject to Phosphoserine. Positions glutamate 217 to glutamine 234 are enriched in basic and acidic residues. 2 stretches are compositionally biased toward low complexity: residues valine 242–serine 253 and isoleucine 264–glutamine 273. A phosphoserine mark is found at serine 324, serine 326, serine 329, serine 334, serine 340, and serine 357. Residues serine 329–isoleucine 338 form an interaction with Elongin BC complex region. A disordered region spans residues threonine 360 to glutamate 443. Acidic residues predominate over residues serine 368 to asparagine 379. Residues serine 411 and serine 540 each carry the phosphoserine modification. 2 coiled-coil regions span residues glutamate 443–arginine 767 and isoleucine 824–glutamate 894. Phosphoserine occurs at positions 923 and 926. The residue at position 927 (threonine 927) is a Phosphothreonine. A Phosphoserine modification is found at serine 931. A coiled-coil region spans residues isoleucine 984–leucine 1090.

Component of the SNF/SWI transcription factor complexes. Interacts with RAB6A. Interacts with TCEB1. Interacts with STAT3 and FER. Interacts with TRNP1; may regulate TRNP1 proteasomal degradation. In terms of processing, phosphorylated by FER.

It localises to the cytoplasm. Its subcellular location is the nucleus. It is found in the golgi apparatus membrane. Functionally, potential coactivator of the androgen receptor. May play critical roles in two RAB6-dependent retrograde transport processes: one from endosomes to the Golgi and the other from the Golgi to the ER. Mediates STAT3 degradation. The protein is TATA element modulatory factor (Tmf1) of Mus musculus (Mouse).